The primary structure comprises 124 residues: Small ribosomal subunit protein uS12 (124 aa).

Position 89 is a 3-methylthioaspartic acid (Asp-89).

It belongs to the universal ribosomal protein uS12 family. Part of the 30S ribosomal subunit. Contacts proteins S8 and S17. May interact with IF1 in the 30S initiation complex.

With S4 and S5 plays an important role in translational accuracy. In terms of biological role, interacts with and stabilizes bases of the 16S rRNA that are involved in tRNA selection in the A site and with the mRNA backbone. Located at the interface of the 30S and 50S subunits, it traverses the body of the 30S subunit contacting proteins on the other side and probably holding the rRNA structure together. The combined cluster of proteins S8, S12 and S17 appears to hold together the shoulder and platform of the 30S subunit. In Baumannia cicadellinicola subsp. Homalodisca coagulata, this protein is Small ribosomal subunit protein uS12.